A 207-amino-acid polypeptide reads, in one-letter code: BON1-associated protein 2 (207 aa).

In terms of domain architecture, C2 spans 1 to 112 (MSYSTFKRSL…GFAPQGHLNF (112 aa)).

Interacts with BON1, BON2 and BON3. Expressed in roots, leaves, stems and flowers.

It localises to the membrane. Its function is as follows. Negative regulator of cell death and defense responses. Exhibits calcium-dependent phospholipid binding properties. This is BON1-associated protein 2 (BAP2) from Arabidopsis thaliana (Mouse-ear cress).